We begin with the raw amino-acid sequence, 466 residues long: Muscarinic acetylcholine receptor M2 (466 aa).

At 1–25 (MNNSTYINSSSENVIALESPYKTIE) the chain is on the extracellular side. N-linked (GlcNAc...) asparagine glycans are attached at residues asparagine 2, asparagine 3, and asparagine 8. A helical membrane pass occupies residues 26–48 (VVFIVLVAGSLSLVTIIGNILVM). Residues 49–62 (VSIKVNRHLQTVNN) are Cytoplasmic-facing. A helical transmembrane segment spans residues 63 to 83 (YFLFSLACADLIIGIFSMNLY). The Extracellular segment spans residues 84–100 (TLYTVIGYWPLGPVVCD). A disulfide bridge links cysteine 99 with cysteine 179. A helical transmembrane segment spans residues 101–122 (LWLALDYVVSNASVMNLLIISF). The Important for signaling motif lies at 123 to 125 (DRY). The Cytoplasmic portion of the chain corresponds to 123-142 (DRYFCVTKPLTYPVKRTTKM). The helical transmembrane segment at 143 to 165 (AGMMIAAAWVLSFILWAPAILFW) threads the bilayer. Residues 166–187 (QFIVGGRTVPDKDCYIQFFSNP) lie on the Extracellular side of the membrane. The chain crosses the membrane as a helical span at residues 188–212 (AVTFGTAIAAFYLPVIIMTVLYWQI). Residues 213-387 (SRASKSRIKK…PPSREKKVTR (175 aa)) lie on the Cytoplasmic side of the membrane. Disordered regions lie at residues 223-265 (GKKE…KVQN) and 279-315 (QGEEKDSSNDSTSVSVVPSNTKEDEAAKDASQISASQ). 2 stretches are compositionally biased toward polar residues: residues 228–238 (AQNQDPVSPSL) and 246–256 (PNNNNIPTSSD). A compositionally biased stretch (low complexity) spans 287-298 (NDSTSVSVVPSN). Residues 388–410 (TILAILLAFIITWTPYNVMVLIN) form a helical membrane-spanning segment. The Extracellular portion of the chain corresponds to 411–418 (SFCASCIP). A disulfide bridge connects residues cysteine 413 and cysteine 416. Residues 419-442 (GTVWTIGYWLCYINSTINPACYAL) traverse the membrane as a helical segment. Residues 436–440 (NPACY) carry the Important for signaling motif. Residues 443–466 (CNATFKKTFKHLLMCHYKNIGATR) are Cytoplasmic-facing. Phosphothreonine occurs at positions 446, 450, and 465.

This sequence belongs to the G-protein coupled receptor 1 family. Muscarinic acetylcholine receptor subfamily. CHRM2 sub-subfamily.

The protein localises to the cell membrane. Its subcellular location is the postsynaptic cell membrane. Functionally, the muscarinic acetylcholine receptor mediates various cellular responses, including inhibition of adenylate cyclase, breakdown of phosphoinositides and modulation of potassium channels through the action of G proteins. Primary transducing effect is adenylate cyclase inhibition. Signaling promotes phospholipase C activity, leading to the release of inositol trisphosphate (IP3); this then triggers calcium ion release into the cytosol. This is Muscarinic acetylcholine receptor M2 (CHRM2) from Gallus gallus (Chicken).